A 46-amino-acid polypeptide reads, in one-letter code: Protein PsbN (46 aa).

Residues 5-27 (TLVTLFVSGLLMSFTGYALYTAF) traverse the membrane as a helical segment.

The protein belongs to the PsbN family.

It is found in the plastid membrane. In terms of biological role, may play a role in photosystem I and II biogenesis. This chain is Protein PsbN, found in Cuscuta obtusiflora (Peruvian dodder).